Here is a 197-residue protein sequence, read N- to C-terminus: Protein Hikeshi (197 aa).

The required for F-X-F-G repeats-nucleoporins recognition and nuclear import stretch occupies residues valine 18–tyrosine 55. Residues glutamine 124 to serine 134 are flexible linker region involved in nuclear import of HSP70 proteins.

The protein belongs to the OPI10 family. As to quaternary structure, forms an asymmetric homodimer; required for binding and nuclear import of HSP70 proteins. Interacts with ATP-bound HSP70 proteins. Interacts with NUP62 and NUP153 (via F-X-F-G repeats). Interacts with HSPA8.

The protein localises to the cytoplasm. The protein resides in the cytosol. It is found in the nucleus. Acts as a specific nuclear import carrier for HSP70 proteins following heat-shock stress: acts by mediating the nucleoporin-dependent translocation of ATP-bound HSP70 proteins into the nucleus. HSP70 proteins import is required to protect cells from heat shock damages. Does not translocate ADP-bound HSP70 proteins into the nucleus. This chain is Protein Hikeshi, found in Homo sapiens (Human).